Reading from the N-terminus, the 394-residue chain is Phosphoglycerate kinase (394 aa).

Substrate-binding positions include 21–23 (DFN), R36, 59–62 (HLGR), R118, and R151. Position 183 is a phosphoserine (S183). K201 provides a ligand contact to ATP. T299 is subject to Phosphothreonine. Residues E323 and 350 to 353 (GGDS) each bind ATP.

This sequence belongs to the phosphoglycerate kinase family. Monomer.

The protein localises to the cytoplasm. The enzyme catalyses (2R)-3-phosphoglycerate + ATP = (2R)-3-phospho-glyceroyl phosphate + ADP. Its pathway is carbohydrate degradation; glycolysis; pyruvate from D-glyceraldehyde 3-phosphate: step 2/5. The protein is Phosphoglycerate kinase (pgk) of Bacillus subtilis (strain 168).